The primary structure comprises 300 residues: Ribosomal RNA small subunit methyltransferase H (300 aa).

Residues 35 to 37 (GGH), aspartate 55, phenylalanine 82, aspartate 100, and glutamine 107 each bind S-adenosyl-L-methionine.

It belongs to the methyltransferase superfamily. RsmH family.

The protein resides in the cytoplasm. The catalysed reaction is cytidine(1402) in 16S rRNA + S-adenosyl-L-methionine = N(4)-methylcytidine(1402) in 16S rRNA + S-adenosyl-L-homocysteine + H(+). In terms of biological role, specifically methylates the N4 position of cytidine in position 1402 (C1402) of 16S rRNA. The polypeptide is Ribosomal RNA small subunit methyltransferase H (Chlamydia trachomatis serovar L2 (strain ATCC VR-902B / DSM 19102 / 434/Bu)).